A 123-amino-acid chain; its full sequence is Small ribosomal subunit protein uS12 (123 aa).

Asp89 bears the 3-methylthioaspartic acid mark. Residues Thr101 to Lys123 form a disordered region. The span at Arg110–Lys123 shows a compositional bias: basic residues.

Belongs to the universal ribosomal protein uS12 family. As to quaternary structure, part of the 30S ribosomal subunit. Contacts proteins S8 and S17. May interact with IF1 in the 30S initiation complex.

With S4 and S5 plays an important role in translational accuracy. In terms of biological role, interacts with and stabilizes bases of the 16S rRNA that are involved in tRNA selection in the A site and with the mRNA backbone. Located at the interface of the 30S and 50S subunits, it traverses the body of the 30S subunit contacting proteins on the other side and probably holding the rRNA structure together. The combined cluster of proteins S8, S12 and S17 appears to hold together the shoulder and platform of the 30S subunit. The sequence is that of Small ribosomal subunit protein uS12 from Paramagnetospirillum magneticum (strain ATCC 700264 / AMB-1) (Magnetospirillum magneticum).